The following is a 112-amino-acid chain: Nitrogen regulatory protein GlnK1 (112 aa).

ADP is bound at residue threonine 29. The ATP site is built by threonine 29 and valine 38. Isoleucine 52–aspartate 54 lines the 2-oxoglutarate pocket. ADP-binding positions include valine 64, aspartate 88–lysine 90, and arginine 101–arginine 103. Residues valine 64, proline 86–lysine 90, and arginine 101–arginine 103 contribute to the ATP site.

Belongs to the P(II) protein family. Homotrimer. Interacts and forms a complex with Amt1.

The protein resides in the cytoplasm. Its activity is regulated as follows. Formation of the GlnK1/Amt1 complex is decreased in the presence of Mg-ATP or 2-oxoglutarate. The presence of both effectors abolishes the formation of the complex. In terms of biological role, involved in the regulation of nitrogen metabolism. Regulates the activity of its targets by protein-protein interaction in response to the nitrogen status of the cell. Regulates the activity of the ammonia channel Amt1 via direct interaction. In Methanocaldococcus jannaschii (strain ATCC 43067 / DSM 2661 / JAL-1 / JCM 10045 / NBRC 100440) (Methanococcus jannaschii), this protein is Nitrogen regulatory protein GlnK1.